Here is a 213-residue protein sequence, read N- to C-terminus: Redox-sensing transcriptional repressor Rex (213 aa).

Residues 18–57 (LYYRFVNTLKSKGIDRVNSKAISEGLNIDSATIRRDFSYF) constitute a DNA-binding region (H-T-H motif). 92–97 (GVGNLG) serves as a coordination point for NAD(+).

The protein belongs to the transcriptional regulatory Rex family. As to quaternary structure, homodimer.

Its subcellular location is the cytoplasm. Modulates transcription in response to changes in cellular NADH/NAD(+) redox state. This chain is Redox-sensing transcriptional repressor Rex, found in Staphylococcus saprophyticus subsp. saprophyticus (strain ATCC 15305 / DSM 20229 / NCIMB 8711 / NCTC 7292 / S-41).